The following is a 66-amino-acid chain: Photosystem II reaction center protein J (66 aa).

Residues L37–Y57 form a helical membrane-spanning segment.

This sequence belongs to the PsbJ family. As to quaternary structure, PSII is composed of 1 copy each of membrane proteins PsbA, PsbB, PsbC, PsbD, PsbE, PsbF, PsbH, PsbI, PsbJ, PsbK, PsbL, PsbM, PsbT, PsbX, PsbY, PsbZ, Psb30/Ycf12, peripheral proteins PsbO, CyanoQ (PsbQ), PsbU, PsbV and a large number of cofactors. It forms dimeric complexes.

It localises to the cellular thylakoid membrane. Its function is as follows. One of the components of the core complex of photosystem II (PSII). PSII is a light-driven water:plastoquinone oxidoreductase that uses light energy to abstract electrons from H(2)O, generating O(2) and a proton gradient subsequently used for ATP formation. It consists of a core antenna complex that captures photons, and an electron transfer chain that converts photonic excitation into a charge separation. This chain is Photosystem II reaction center protein J, found in Synechococcus sp. (strain WH7803).